A 91-amino-acid polypeptide reads, in one-letter code: Glycophorin-B (91 aa).

The N-terminal stretch at 1 to 19 is a signal peptide; the sequence is MYGKIIFVLLLSEIVSISA. At 20–59 the chain is on the extracellular side; it reads LSTTEVAMHTSTSSSVTKSYISSQTNGETGQLVHRFTVPA. A glycan (O-linked (GalNAc...) threonine) is linked at T36. S38 carries O-linked (GalNAc...) serine glycosylation. A helical membrane pass occupies residues 60-81; the sequence is PVVIILIILCVMAGIIGTILLI. At 82–91 the chain is on the cytoplasmic side; the sequence is SYSIRRLIKA.

This sequence belongs to the glycophorin-A family. In terms of assembly, component of the ankyrin-1 complex in the erythrocyte, composed of ANK1, RHCE, RHAG, SLC4A1, EPB42, GYPA, GYPB and AQP1. Interacts (via the N-terminal) with RHAG; this interaction bridges the (RHAG)2(RHCE) heterotrimer with the SLC4A1 Band 3 I dimer complexed with GYPA. In terms of processing, the N-terminal extracellular domain is heavily glycosylated on serine and threonine residues.

The protein resides in the cell membrane. In terms of biological role, component of the ankyrin-1 complex, a multiprotein complex involved in the stability and shape of the erythrocyte membrane. The sequence is that of Glycophorin-B from Homo sapiens (Human).